Consider the following 102-residue polypeptide: Keratin-associated protein 25-1 (102 aa).

The protein belongs to the PMG family. In terms of assembly, interacts with hair keratins.

In the hair cortex, hair keratin intermediate filaments are embedded in an interfilamentous matrix, consisting of hair keratin-associated proteins (KRTAP), which are essential for the formation of a rigid and resistant hair shaft through their extensive disulfide bond cross-linking with abundant cysteine residues of hair keratins. The matrix proteins include the high-sulfur and high-glycine-tyrosine keratins. The sequence is that of Keratin-associated protein 25-1 (KRTAP25-1) from Homo sapiens (Human).